The primary structure comprises 276 residues: Dermonecrotic toxin LlSicTox-alphaIV1ii (276 aa).

His-5 is a catalytic residue. Residues Glu-25 and Asp-27 each coordinate Mg(2+). The active-site Nucleophile is the His-41. 2 disulfides stabilise this stretch: Cys-45–Cys-51 and Cys-47–Cys-193. Asp-85 lines the Mg(2+) pocket.

It belongs to the arthropod phospholipase D family. Class II subfamily. Mg(2+) is required as a cofactor. In terms of tissue distribution, expressed by the venom gland.

The protein localises to the secreted. It catalyses the reaction an N-(acyl)-sphingosylphosphocholine = an N-(acyl)-sphingosyl-1,3-cyclic phosphate + choline. It carries out the reaction an N-(acyl)-sphingosylphosphoethanolamine = an N-(acyl)-sphingosyl-1,3-cyclic phosphate + ethanolamine. The catalysed reaction is a 1-acyl-sn-glycero-3-phosphocholine = a 1-acyl-sn-glycero-2,3-cyclic phosphate + choline. The enzyme catalyses a 1-acyl-sn-glycero-3-phosphoethanolamine = a 1-acyl-sn-glycero-2,3-cyclic phosphate + ethanolamine. Its function is as follows. Dermonecrotic toxins cleave the phosphodiester linkage between the phosphate and headgroup of certain phospholipids (sphingolipid and lysolipid substrates), forming an alcohol (often choline) and a cyclic phosphate. This toxin acts on sphingomyelin (SM). It may also act on ceramide phosphoethanolamine (CPE), lysophosphatidylcholine (LPC) and lysophosphatidylethanolamine (LPE), but not on lysophosphatidylserine (LPS), and lysophosphatidylglycerol (LPG). It acts by transphosphatidylation, releasing exclusively cyclic phosphate products as second products. Induces dermonecrosis, hemolysis, increased vascular permeability, edema, inflammatory response, and platelet aggregation. In Loxosceles laeta (South American recluse spider), this protein is Dermonecrotic toxin LlSicTox-alphaIV1ii.